A 523-amino-acid polypeptide reads, in one-letter code: GMP synthase [glutamine-hydrolyzing] (523 aa).

A Glutamine amidotransferase type-1 domain is found at 8-205 (RILILDFGSQ…IRELCECEAL (198 aa)). Cys85 (nucleophile) is an active-site residue. Residues His179 and Glu181 contribute to the active site. The GMPS ATP-PPase domain occupies 206 to 398 (WTPSNIISDA…LGLPYDMVYR (193 aa)). 233–239 (SGGVDSS) contacts ATP.

In terms of assembly, homodimer.

The catalysed reaction is XMP + L-glutamine + ATP + H2O = GMP + L-glutamate + AMP + diphosphate + 2 H(+). Its pathway is purine metabolism; GMP biosynthesis; GMP from XMP (L-Gln route): step 1/1. Its function is as follows. Catalyzes the synthesis of GMP from XMP. The polypeptide is GMP synthase [glutamine-hydrolyzing] (Alcanivorax borkumensis (strain ATCC 700651 / DSM 11573 / NCIMB 13689 / SK2)).